The chain runs to 382 residues: Mannitol-1-phosphate 5-dehydrogenase (382 aa).

3–14 (ALHFGAGNIGRG) serves as a coordination point for NAD(+).

Belongs to the mannitol dehydrogenase family.

The catalysed reaction is D-mannitol 1-phosphate + NAD(+) = beta-D-fructose 6-phosphate + NADH + H(+). The polypeptide is Mannitol-1-phosphate 5-dehydrogenase (Erwinia tasmaniensis (strain DSM 17950 / CFBP 7177 / CIP 109463 / NCPPB 4357 / Et1/99)).